Consider the following 644-residue polypeptide: Exoribonuclease 2 (644 aa).

An RNB domain is found at 189–516; sequence REDLTALDFV…NHRLLKAVIK (328 aa). The 83-residue stretch at 561 to 643 folds into the S1 motif domain; that stretch reads GTRFAAEIVD…ETRGIIARPV (83 aa).

It belongs to the RNR ribonuclease family. RNase II subfamily.

Its subcellular location is the cytoplasm. The catalysed reaction is Exonucleolytic cleavage in the 3'- to 5'-direction to yield nucleoside 5'-phosphates.. Its function is as follows. Involved in mRNA degradation. Hydrolyzes single-stranded polyribonucleotides processively in the 3' to 5' direction. This chain is Exoribonuclease 2, found in Shigella sonnei (strain Ss046).